The primary structure comprises 416 residues: Putative serine protease HhoB (416 aa).

A signal peptide spans 1–25 (MAIHLKASHLGVAVLLLLFGGAIGA). Residues 35-53 (GQNHSSPDSPVNTSPQSLT) show a composition bias toward polar residues. The segment at 35–57 (GQNHSSPDSPVNTSPQSLTPAPV) is disordered. In terms of domain architecture, PDZ spans 320-398 (EMTKQLRTSG…PLAIAVKRGQ (79 aa)).

Belongs to the peptidase S1C family.

In terms of biological role, a putative protease, its function overlaps that of the related putative proteases HtrA and HhoA. This Synechocystis sp. (strain ATCC 27184 / PCC 6803 / Kazusa) protein is Putative serine protease HhoB (hhoB).